We begin with the raw amino-acid sequence, 339 residues long: Serpentine receptor class delta-32 (339 aa).

The next 7 membrane-spanning stretches (helical) occupy residues 14–34, 45–65, 94–114, 128–148, 188–208, 237–257, and 269–289; these read AAVV…LIFF, VFLA…LLTV, IFTT…LSMV, SGAF…VVSI, LWVA…MFWC, ALTV…LIFL, and FGYI…LVTI.

The protein belongs to the nematode receptor-like protein srd family.

It is found in the membrane. The polypeptide is Serpentine receptor class delta-32 (srd-32) (Caenorhabditis elegans).